Consider the following 460-residue polypeptide: DNA repair protein RadA (460 aa).

A C4-type zinc finger spans residues 11-28 (CNECGADYPRWQGQCSAC). 102–109 (GNPGAGKS) is a binding site for ATP. The RadA KNRFG motif signature appears at 258 to 262 (KNRFG). The interval 357 to 460 (DVFVNVVGGV…SDALSVFDDL (104 aa)) is lon-protease-like.

Belongs to the RecA family. RadA subfamily.

In terms of biological role, DNA-dependent ATPase involved in processing of recombination intermediates, plays a role in repairing DNA breaks. Stimulates the branch migration of RecA-mediated strand transfer reactions, allowing the 3' invading strand to extend heteroduplex DNA faster. Binds ssDNA in the presence of ADP but not other nucleotides, has ATPase activity that is stimulated by ssDNA and various branched DNA structures, but inhibited by SSB. Does not have RecA's homology-searching function. Genetic experiments involving combination of radA mutations with mutations in recA, recB, recG, recJ, recQ, ruvA and ruvC show it plays a role in recombination and recombinational repair, probably involving stabilizing or processing branched DNA or blocked replication forks. Is genetically synergistic to RecG and RuvABC. May be involved in recovery of genetic rearrangements during replication fork breakdown. In combination with RadD is important in recovery from double-strand DNA breaks (DSB). This chain is DNA repair protein RadA, found in Escherichia coli (strain K12).